We begin with the raw amino-acid sequence, 588 residues long: Pescadillo homolog (588 aa).

A BRCT domain is found at 344-437 (PVSTLFSDFV…KLVPANLYLP (94 aa)). Disordered stretches follow at residues 446 to 533 (SPWG…EAEE) and 559 to 588 (KKEE…EGKK). A compositionally biased stretch (acidic residues) spans 460–493 (DAEEEGEDDEDEDSEEGSGAEVEENVDEDEDDEE). Basic and acidic residues-rich tracts occupy residues 510–519 (SDIKDTEVKS) and 576–588 (KTKE…EGKK). Residues 512–588 (IKDTEVKSKN…EKLTKLEGKK (77 aa)) are a coiled coil.

Belongs to the pescadillo family. In terms of assembly, component of the NOP7 complex, composed of ERB1, NOP7 and YTM1. The complex is held together by ERB1, which interacts with NOP7 via its N-terminal domain and with YTM1 via a high-affinity interaction between the seven-bladed beta-propeller domains of the 2 proteins. The NOP7 complex associates with the 66S pre-ribosome.

It is found in the nucleus. It localises to the nucleolus. Its subcellular location is the nucleoplasm. Functionally, component of the NOP7 complex, which is required for maturation of the 25S and 5.8S ribosomal RNAs and formation of the 60S ribosome. In Vanderwaltozyma polyspora (strain ATCC 22028 / DSM 70294 / BCRC 21397 / CBS 2163 / NBRC 10782 / NRRL Y-8283 / UCD 57-17) (Kluyveromyces polysporus), this protein is Pescadillo homolog.